The following is a 4490-amino-acid chain: Dynein axonemal heavy chain 8 (4490 aa).

Phosphoserine is present on Ser674. AAA stretches follow at residues 1808–2030 (YQNE…VLRT), 2090–2309 (NAVA…KLNL), 2416–2669 (YYPT…IWQG), and 2780–3034 (QFNE…YRRR). ATP contacts are provided by residues 1846–1853 (GPAGTGKT) and 2128–2135 (GPSGSGKT). Positions 3049–3346 (YKNIYAEKVK…MDLLNDADTC (298 aa)) are stalk. 3 coiled-coil regions span residues 3072–3164 (DKLM…ALNT), 3290–3354 (LKAN…QAAS), and 3594–3630 (RRVI…DNLL). AAA stretches follow at residues 3432 to 3662 (LVDP…EVSE) and 3877 to 4091 (ARKY…FIQN).

The protein belongs to the dynein heavy chain family. In terms of assembly, consists of at least two heavy chains and a number of intermediate and light chains. In terms of tissue distribution, expressed in spermatozoa (at protein level). Not detected in airway epithelial cells (at protein level).

It is found in the cytoplasm. Its subcellular location is the cytoskeleton. The protein localises to the flagellum axoneme. In terms of biological role, force generating protein component of the outer dynein arms (ODAs) in the sperm flagellum. Produces force towards the minus ends of microtubules. Dynein has ATPase activity; the force-producing power stroke is thought to occur on release of ADP. Involved in sperm motility; implicated in sperm flagellar assembly. This is Dynein axonemal heavy chain 8 from Homo sapiens (Human).